The following is a 227-amino-acid chain: ATP synthase F(0) complex subunit a (227 aa).

A run of 6 helical transmembrane segments spans residues 13 to 33 (YLLG…LFPA), 69 to 89 (WALL…LGLL), 98 to 118 (QLSL…IIGM), 132 to 152 (EGTP…SLFI), 179 to 199 (VFVL…VLFL), and 202 to 222 (LLEV…LSLY).

This sequence belongs to the ATPase A chain family. In terms of assembly, component of the ATP synthase complex composed at least of ATP5F1A/subunit alpha, ATP5F1B/subunit beta, ATP5MC1/subunit c (homooctomer), MT-ATP6/subunit a, MT-ATP8/subunit 8, ATP5ME/subunit e, ATP5MF/subunit f, ATP5MG/subunit g, ATP5MK/subunit k, ATP5MJ/subunit j, ATP5F1C/subunit gamma, ATP5F1D/subunit delta, ATP5F1E/subunit epsilon, ATP5PF/subunit F6, ATP5PB/subunit b, ATP5PD/subunit d, ATP5PO/subunit OSCP. ATP synthase complex consists of a soluble F(1) head domain (subunits alpha(3) and beta(3)) - the catalytic core - and a membrane F(0) domain - the membrane proton channel (subunits c, a, 8, e, f, g, k and j). These two domains are linked by a central stalk (subunits gamma, delta, and epsilon) rotating inside the F1 region and a stationary peripheral stalk (subunits F6, b, d, and OSCP). Interacts with DNAJC30; interaction is direct.

Its subcellular location is the mitochondrion inner membrane. The enzyme catalyses H(+)(in) = H(+)(out). In terms of biological role, subunit a, of the mitochondrial membrane ATP synthase complex (F(1)F(0) ATP synthase or Complex V) that produces ATP from ADP in the presence of a proton gradient across the membrane which is generated by electron transport complexes of the respiratory chain. ATP synthase complex consist of a soluble F(1) head domain - the catalytic core - and a membrane F(1) domain - the membrane proton channel. These two domains are linked by a central stalk rotating inside the F(1) region and a stationary peripheral stalk. During catalysis, ATP synthesis in the catalytic domain of F(1) is coupled via a rotary mechanism of the central stalk subunits to proton translocation. With the subunit c (ATP5MC1), forms the proton-conducting channel in the F(0) domain, that contains two crucial half-channels (inlet and outlet) that facilitate proton movement from the mitochondrial intermembrane space (IMS) into the matrix. Protons are taken up via the inlet half-channel and released through the outlet half-channel, following a Grotthuss mechanism. In Danio rerio (Zebrafish), this protein is ATP synthase F(0) complex subunit a.